The chain runs to 408 residues: Argininosuccinate synthase (408 aa).

ATP contacts are provided by residues 16–24 (AYSGGLDTS) and Ala44. Residues Tyr96 and Ser101 each contribute to the L-citrulline site. Residue Gly126 coordinates ATP. L-aspartate is bound by residues Thr128, Asn132, and Asp133. Residue Asn132 coordinates L-citrulline. 5 residues coordinate L-citrulline: Arg136, Ser185, Ser194, Glu270, and Tyr282.

The protein belongs to the argininosuccinate synthase family. Type 1 subfamily. As to quaternary structure, homotetramer.

The protein localises to the cytoplasm. It carries out the reaction L-citrulline + L-aspartate + ATP = 2-(N(omega)-L-arginino)succinate + AMP + diphosphate + H(+). The protein operates within amino-acid biosynthesis; L-arginine biosynthesis; L-arginine from L-ornithine and carbamoyl phosphate: step 2/3. The polypeptide is Argininosuccinate synthase (Shewanella woodyi (strain ATCC 51908 / MS32)).